Consider the following 272-residue polypeptide: Elongation factor Ts (272 aa).

An involved in Mg(2+) ion dislocation from EF-Tu region spans residues 76 to 79; sequence TDFV.

Belongs to the EF-Ts family.

Its subcellular location is the cytoplasm. Its function is as follows. Associates with the EF-Tu.GDP complex and induces the exchange of GDP to GTP. It remains bound to the aminoacyl-tRNA.EF-Tu.GTP complex up to the GTP hydrolysis stage on the ribosome. The sequence is that of Elongation factor Ts from Corynebacterium jeikeium (strain K411).